Here is a 224-residue protein sequence, read N- to C-terminus: Methylamine utilization ferredoxin-type protein MauM (224 aa).

The N-terminal stretch at 1–41 (MEARMTGRRKVTRRDAMADAARAVGVACLGGFSLAALVRTA) is a signal peptide. 4 consecutive 4Fe-4S ferredoxin-type domains span residues 54 to 84 (ALPE…LAEW), 91 to 124 (GTPF…RDIP), 133 to 169 (VAVL…LEPQ), and 177 to 208 (MIPV…VLPR). [4Fe-4S] cluster is bound by residues Cys-64, Cys-67, Cys-70, Cys-74, Cys-102, Cys-105, Cys-110, Cys-114, Cys-142, Cys-150, Cys-153, Cys-157, Cys-186, Cys-189, Cys-192, and Cys-196.

It participates in one-carbon metabolism; methylamine degradation. In terms of biological role, involved in electron transfer. This is Methylamine utilization ferredoxin-type protein MauM (mauM) from Paracoccus denitrificans (strain Pd 1222).